We begin with the raw amino-acid sequence, 405 residues long: N-methyltransferase nanE (405 aa).

S-adenosyl-L-methionine is bound by residues 238-239 (GG), Asp261, and 290-291 (HH).

This sequence belongs to the class I-like SAM-binding methyltransferase superfamily. Cation-independent O-methyltransferase family.

It functions in the pathway secondary metabolite biosynthesis. N-methyltransferase; part of the gene cluster that mediates the biosynthesis of the benzazepine alkaloid nanangelenin A which contains an unprecedented 3,4-dihydro-1-benzazepine-2,5-dione-N-prenyl-N-acetoxy-anthranilamide scaffold. The first step of nanangelenin biosynthesis is catalyzed by the indoleamine 2,3-dioxygenase nanC which produces N-formyl-kynurenine through the catabolism of tryptophan. The two-module NRPS nanA then utilizes anthranilate (Ant) and L-kynurenine (L-Kyn) to assemble the dipeptide product nanangelenin B. The first adenylation domain of nanA (A1) loads anthranilate onto the T1 domain, while A2 loads kynurenine, generated through spontaneous nonenzymatic deformylation of the nanC-supplied N-formyl-kynurenine. The peptide bond formation between the tethered amino acids is catalyzed by the first condensation domain (C1) between anthranilate's carbonyl carbon and kynurenine's aliphatic primary amine. The second C domain (C2) catalyzes the final cyclization event between the aromatic amine of kynurenine and the tethered carbonyl carbon, yielding nanangelenin B. The terminal T3 domain enhances the catalytic efficiency of C2, suggesting the T2-tethered Ant-L-Kyn is transferred to T3 prior to cyclization by C2. Once released from nanA, nanangelenin B is then prenylated by the prenyltransferase nanD to form nanangelenin C. Nanangelenin C is then N-hydroxylated by the FAD-dependent monooxygenase nanF and further acetylated by the acetyltransferase nanB to yield nanangelenin F. Finally, the N-methyltransferase nanE methylates the amide nitrogen of 1-benzazepine to convert nanangelenin F into nanangelenin A. NanE is also able to methylate most of the intermediates of the pathway such as nanangelenin B and nanangelenin C to produce nanangelenin D and nanangelenin E, respectively. The sequence is that of N-methyltransferase nanE from Aspergillus nanangensis.